The following is a 567-amino-acid chain: Probable serine/threonine-protein kinase WNK6 (567 aa).

The Protein kinase domain occupies 28 to 285; the sequence is IRYKEVIGKG…AKELLLDPFL (258 aa). ATP contacts are provided by residues 108–111 and K158; that span reads TELF. Catalysis depends on D175, which acts as the Proton acceptor. A compositionally biased stretch (basic and acidic residues) spans 499–509; sequence VDATKGEDKSS. Residues 499–528 form a disordered region; it reads VDATKGEDKSSIQEVEEATEPVSLEEEERL. A compositionally biased stretch (acidic residues) spans 512 to 525; it reads EVEEATEPVSLEEE. Positions 519–553 form a coiled coil; that stretch reads PVSLEEEERLRQELEEIEAKYQEDMKEIATKREEA.

This sequence belongs to the protein kinase superfamily. Ser/Thr protein kinase family. WNK subfamily.

It carries out the reaction L-seryl-[protein] + ATP = O-phospho-L-seryl-[protein] + ADP + H(+). The enzyme catalyses L-threonyl-[protein] + ATP = O-phospho-L-threonyl-[protein] + ADP + H(+). In terms of biological role, may regulate flowering time by modulating the photoperiod pathway. This chain is Probable serine/threonine-protein kinase WNK6 (WNK6), found in Arabidopsis thaliana (Mouse-ear cress).